The primary structure comprises 672 residues: ATP-dependent zinc metalloprotease FtsH 1 (672 aa).

The disordered stretch occupies residues Met-1–Arg-22. At Met-1 to Arg-23 the chain is on the cytoplasmic side. The chain crosses the membrane as a helical span at residues Gly-24–Asn-44. The Periplasmic portion of the chain corresponds to Gln-45–Ala-141. Residues Ile-142 to Met-162 form a helical membrane-spanning segment. The Cytoplasmic portion of the chain corresponds to Ile-163 to Asp-672. Residue Gly-237–Thr-244 participates in ATP binding. Zn(2+) is bound at residue His-458. The active site involves Glu-459. Zn(2+)-binding residues include His-462 and Asp-534. Residues Arg-642–Asp-672 are disordered. A compositionally biased stretch (polar residues) spans Arg-662–Asp-672.

This sequence in the central section; belongs to the AAA ATPase family. The protein in the C-terminal section; belongs to the peptidase M41 family. As to quaternary structure, homohexamer. It depends on Zn(2+) as a cofactor.

It localises to the cell inner membrane. Functionally, acts as a processive, ATP-dependent zinc metallopeptidase for both cytoplasmic and membrane proteins. Plays a role in the quality control of integral membrane proteins. The sequence is that of ATP-dependent zinc metalloprotease FtsH 1 from Rhodopirellula baltica (strain DSM 10527 / NCIMB 13988 / SH1).